A 202-amino-acid chain; its full sequence is uncharacterized protein (202 aa).

An N-terminal signal peptide occupies residues 1–18 (MKNRLLILSLLVSVPAFA).

It to E.coli YebB.

This is an uncharacterized protein from Escherichia coli (strain K12).